A 430-amino-acid chain; its full sequence is Adenylosuccinate synthetase (430 aa).

GTP is bound by residues 13 to 19 (GDEGKGK) and 41 to 43 (GHT). Asp14 (proton acceptor) is an active-site residue. Positions 14 and 41 each coordinate Mg(2+). IMP contacts are provided by residues 14–17 (DEGK), 39–42 (NAGH), Thr130, Arg144, Gln225, Thr240, and Arg304. His42 (proton donor) is an active-site residue. 300-306 (ATTGRAR) is a substrate binding site. Residues Arg306, 332 to 334 (KLD), and 414 to 416 (STG) contribute to the GTP site.

It belongs to the adenylosuccinate synthetase family. Homodimer. Mg(2+) is required as a cofactor.

Its subcellular location is the cytoplasm. It carries out the reaction IMP + L-aspartate + GTP = N(6)-(1,2-dicarboxyethyl)-AMP + GDP + phosphate + 2 H(+). The protein operates within purine metabolism; AMP biosynthesis via de novo pathway; AMP from IMP: step 1/2. In terms of biological role, plays an important role in the de novo pathway of purine nucleotide biosynthesis. Catalyzes the first committed step in the biosynthesis of AMP from IMP. The sequence is that of Adenylosuccinate synthetase from Pseudomonas syringae pv. tomato (strain ATCC BAA-871 / DC3000).